Consider the following 386-residue polypeptide: Cytochrome b (386 aa).

4 helical membrane-spanning segments follow: residues 32–52 (LGSLLGLCLVIQICTGIFLAM), 76–98 (WFIRYAHANGASFFFICMYIHIG), 113–133 (VWNVGVIIFVLTMAAAFLGYC), and 179–199 (FFAFHYLVPFIIAAFVIMHFM). The heme b site is built by His-82 and His-96. Heme b contacts are provided by His-183 and His-197. Residue His-202 coordinates a ubiquinone. 4 helical membrane-spanning segments follow: residues 225–245 (FIFKDLITVFVFLFFFSLFVF), 289–309 (LLGVLAMFGAILILLVLPITD), 321–341 (FSKFFFFLFIANFVLLGHLGE), and 348–368 (FVVMGQIATVIYFAYFLVIVP).

Belongs to the cytochrome b family. As to quaternary structure, fungal cytochrome b-c1 complex contains 10 subunits; 3 respiratory subunits, 2 core proteins and 5 low-molecular weight proteins. Cytochrome b-c1 complex is a homodimer. It depends on heme b as a cofactor.

It is found in the mitochondrion inner membrane. Functionally, component of the ubiquinol-cytochrome c reductase complex (complex III or cytochrome b-c1 complex) that is part of the mitochondrial respiratory chain. The b-c1 complex mediates electron transfer from ubiquinol to cytochrome c. Contributes to the generation of a proton gradient across the mitochondrial membrane that is then used for ATP synthesis. The chain is Cytochrome b (COB) from Kluyveromyces lactis (strain ATCC 8585 / CBS 2359 / DSM 70799 / NBRC 1267 / NRRL Y-1140 / WM37) (Yeast).